Consider the following 420-residue polypeptide: Cysteate-C-fatty acyltransferase (420 aa).

Pyridoxal 5'-phosphate is bound by residues 114-115, H219, T247, and A249; that span reads GY. K250 carries the N6-(pyridoxal phosphate)lysine modification.

The protein belongs to the class-II pyridoxal-phosphate-dependent aminotransferase family. It depends on pyridoxal 5'-phosphate as a cofactor.

The catalysed reaction is isopentadecanoyl-CoA + L-cysteate + H(+) = 3-oxocapnine + CO2 + CoA. It participates in lipid metabolism. Functionally, transferase involved in the biosynthesis of capnine, a sulfonolipid present in the outer membrane of gliding Bacteroidetes and essential for gliding motility. Catalyzes the formation of 3-dehydrocapnine from cysteate and isopentadecanoyl-CoA (13-methyl-myristoyl-CoA). In vitro, products are also detected when 13-methyl-myristic acid is substituted with tridecylic acid, myristic acid, pentadecanoic acid or palmitic acid. The polypeptide is Cysteate-C-fatty acyltransferase (Capnocytophaga ochracea (strain ATCC 27872 / DSM 7271 / CCUG 9716 / JCM 12966 / NCTC 12371 / SS31 / VPI 2845) (Bacteroides ochraceus)).